A 478-amino-acid chain; its full sequence is PRAME family member 27 (478 aa).

The stretch at 17–40 is one LRR 1 repeat; that stretch reads RSLLRDQALAMSTLEELPTELFPP. The LRR 1; degenerate repeat unit spans residues 99–126; it reads RWKLQVLDLQDVCENFWMVWSEAMARGS. Residues 181 to 205 form an LRR 2; degenerate repeat; sequence HLCCKKLKILGMPFRNIRSILKMVN. Residues 206-232 form an LRR 3; degenerate repeat; the sequence is LDCIQEVEVNCKWVLPILTQFTPYLGH. The LRR 4; degenerate repeat unit spans residues 233-268; that stretch reads MRNLQKLVLSHMDVSRYVSPEQKKEIVTQFTTQFLK. 5 LRR repeats span residues 269–294, 295–326, 327–348, 351–378, and 379–403; these read LHCL…LSCL, KTSL…SQLK, TLDL…ILLE, AATL…ALSR, and CFEL…LLSH.

Belongs to the PRAME family.

The polypeptide is PRAME family member 27 (Homo sapiens (Human)).